The chain runs to 58 residues: Large ribosomal subunit protein eL20 (58 aa).

The disordered stretch occupies residues 37–58 (TTVGSQHNRKRPQIEIKEVSAA). Positions 48–58 (PQIEIKEVSAA) are enriched in basic and acidic residues.

This sequence belongs to the eukaryotic ribosomal protein eL20 family. Part of the 50S ribosomal subunit. Binds 23S rRNA.

This is Large ribosomal subunit protein eL20 from Halorubrum lacusprofundi (strain ATCC 49239 / DSM 5036 / JCM 8891 / ACAM 34).